A 53-amino-acid chain; its full sequence is UPF0391 membrane protein azo1750 (53 aa).

Helical transmembrane passes span Val6 to Gly26 and Ile30 to Met50.

Belongs to the UPF0391 family.

The protein resides in the cell membrane. This is UPF0391 membrane protein azo1750 from Azoarcus sp. (strain BH72).